The following is a 176-amino-acid chain: Methylmalonyl-CoA epimerase, mitochondrial (176 aa).

Residues 1-36 (MARVLKAAAANAVGLFSRLQAPIPTVRASSTSQPLD) constitute a mitochondrion transit peptide. The VOC domain maps to 47 to 176 (RLNHVAIAVP…GGVLVELEQA (130 aa)). Residue histidine 50 participates in Co(2+) binding. Lysine 114 is subject to N6-succinyllysine. Position 122 (histidine 122) interacts with Co(2+). An N6-acetyllysine; alternate modification is found at lysine 150. Lysine 150 is subject to N6-succinyllysine; alternate. Glutamate 172 lines the Co(2+) pocket.

This sequence belongs to the methylmalonyl-CoA epimerase family.

It localises to the mitochondrion. It catalyses the reaction (R)-methylmalonyl-CoA = (S)-methylmalonyl-CoA. Functionally, methylmalonyl-CoA epimerase involved in propionyl-CoA metabolism. This is Methylmalonyl-CoA epimerase, mitochondrial from Homo sapiens (Human).